Consider the following 102-residue polypeptide: Large ribosomal subunit protein bL28 (102 aa).

Positions 1–20 (MSRRCELTAKGPQVGHKVSH) are disordered.

This sequence belongs to the bacterial ribosomal protein bL28 family.

This Bradyrhizobium sp. (strain ORS 278) protein is Large ribosomal subunit protein bL28.